A 195-amino-acid chain; its full sequence is Probable peroxygenase 4 (195 aa).

Residues 14 to 49 form the EF-hand domain; the sequence is EEDNFLQRHVAFFDRNKDGIVYPSETFQGFRAIGCG. His22 contacts heme. Ca(2+) contacts are provided by Asp27, Asn29, Asp31, and Glu38. Residues 70–79 carry the Proline-knot motif; that stretch reads PGKGFSIWFP. A Phosphoserine modification is found at Ser177.

This sequence belongs to the caleosin family. As to quaternary structure, homodimer. It depends on heme b as a cofactor. Requires Ca(2+) as cofactor. In terms of tissue distribution, expressed in roots, leaves, stems, shoots, flowers and germinated seeds. Barely detected in dry seeds prior to germination. Preferentially expressed in vascular bundles and in guard cells.

It is found in the lipid droplet. It catalyses the reaction RH + ROOH = ROH + ROH.. Calcium-binding peroxygenase involved in the degradation of storage lipid in oil bodies. May be involved in the interaction between oil bodies and vacuoles during seed germination. Acts as a negative regulator of abscisic acid responses in non-seed tissues. This chain is Probable peroxygenase 4 (PXG4), found in Arabidopsis thaliana (Mouse-ear cress).